The following is a 689-amino-acid chain: Glycine--tRNA ligase beta subunit (689 aa).

It belongs to the class-II aminoacyl-tRNA synthetase family. As to quaternary structure, tetramer of two alpha and two beta subunits.

It is found in the cytoplasm. It catalyses the reaction tRNA(Gly) + glycine + ATP = glycyl-tRNA(Gly) + AMP + diphosphate. The chain is Glycine--tRNA ligase beta subunit from Actinobacillus pleuropneumoniae serotype 3 (strain JL03).